We begin with the raw amino-acid sequence, 556 residues long: Non-structural maintenance of chromosome element 5 (556 aa).

As to quaternary structure, component of the Smc5-Smc6 complex which consists of KRE29, MMS21, NSE1, NSE3, NSE4, NSE5, SMC5 and SMC6. Interacts with KRE29.

It is found in the nucleus. It localises to the chromosome. In terms of biological role, acts in a DNA repair pathway for removal of UV-induced DNA damage that is distinct from classical nucleotide excision repair and in repair of ionizing radiation damage. Functions in homologous recombination repair of DNA double strand breaks and in recovery of stalled replication forks. The polypeptide is Non-structural maintenance of chromosome element 5 (NSE5) (Saccharomyces cerevisiae (strain ATCC 204508 / S288c) (Baker's yeast)).